An 83-amino-acid polypeptide reads, in one-letter code: Large ribosomal subunit protein eL43 (83 aa).

4 residues coordinate Zn(2+): Cys38, Cys41, Cys56, and Cys59. The segment at 38 to 59 (CPVCGRRAVRRISTGIWQCKKC) adopts a C4-type zinc-finger fold.

Belongs to the eukaryotic ribosomal protein eL43 family. Putative zinc-binding subfamily. In terms of assembly, part of the 50S ribosomal subunit. Zn(2+) serves as cofactor.

Functionally, binds to the 23S rRNA. This chain is Large ribosomal subunit protein eL43, found in Pyrococcus abyssi (strain GE5 / Orsay).